A 214-amino-acid polypeptide reads, in one-letter code: Probable maleylacetoacetate isomerase (214 aa).

Positions 4 to 84 constitute a GST N-terminal domain; the sequence is QKPVLYSYWR…YLEETHPDVP (81 aa). Residues 14 to 19, Val-56, 68 to 69, Gln-108, and 112 to 114 each bind glutathione; these read SSCSWR, ES, and NLK. One can recognise a GST C-terminal domain in the interval 89–212; the sequence is DPIKRAHARA…HPDNQPDTGL (124 aa).

Belongs to the GST superfamily. Zeta family. It depends on glutathione as a cofactor.

The protein localises to the cytoplasm. It catalyses the reaction 4-maleylacetoacetate = 4-fumarylacetoacetate. It participates in amino-acid degradation; L-phenylalanine degradation; acetoacetate and fumarate from L-phenylalanine: step 5/6. This Caenorhabditis elegans protein is Probable maleylacetoacetate isomerase (gst-42).